We begin with the raw amino-acid sequence, 1616 residues long: Putative inactive phenolphthiocerol synthesis polyketide synthase type I Pks1 (1616 aa).

Residues 83 to 397 (TVVVFPGQGA…GQVFTTGVPV (315 aa)) form an acyltransferase region. The active-site For acyltransferase activity is the Ser-174. Residues 445–567 (HALLGAVVER…GMLGVAAAET (123 aa)) are N-terminal hotdog fold. Residues 445–605 (HALLGAVVER…YAYGPAFQGL (161 aa)) form a dehydratase region. One can recognise a PKS/mFAS DH domain in the interval 445-719 (HALLGAVVER…TRPITAEQLR (275 aa)). Catalysis depends on His-477, which acts as the Proton acceptor; for dehydratase activity. Residues 579 to 719 (AESVDISDGY…TRPITAEQLR (141 aa)) are C-terminal hotdog fold. Asp-640 acts as the Proton donor; for dehydratase activity in catalysis. Residues 910–1215 (GTLEDLVIQP…QARHIGKVVL (306 aa)) are enoylreductase. Residues 1040–1057 (VLIHAGTGGVGMAAVQLA) and 1229–1244 (TVVITGATGAVGGVLA) each bind NADP(+). Positions 1228–1409 (GTVVITGATG…SLAWGLWEQP (182 aa)) are beta-ketoacyl reductase. Residues 1514-1589 (ELLVGLVCLQ…AVAEYVAQQM (76 aa)) enclose the Carrier domain. Ser-1549 carries the O-(pantetheine 4'-phosphoryl)serine modification. The span at 1588–1604 (QMSGSRPTESGDPTSQV) shows a compositional bias: polar residues. The segment at 1588-1616 (QMSGSRPTESGDPTSQVVEPAAAEVSVHA) is disordered.

Pantetheine 4'-phosphate serves as cofactor.

It functions in the pathway lipid metabolism; fatty acid biosynthesis. May play a role in phthiocerol biosynthesis. In Mycobacterium tuberculosis (strain ATCC 25618 / H37Rv), this protein is Putative inactive phenolphthiocerol synthesis polyketide synthase type I Pks1 (pks1).